The sequence spans 356 residues: Histidinol-phosphate aminotransferase (356 aa).

Residue Lys214 is modified to N6-(pyridoxal phosphate)lysine.

It belongs to the class-II pyridoxal-phosphate-dependent aminotransferase family. Histidinol-phosphate aminotransferase subfamily. Homodimer. Pyridoxal 5'-phosphate is required as a cofactor.

The enzyme catalyses L-histidinol phosphate + 2-oxoglutarate = 3-(imidazol-4-yl)-2-oxopropyl phosphate + L-glutamate. It functions in the pathway amino-acid biosynthesis; L-histidine biosynthesis; L-histidine from 5-phospho-alpha-D-ribose 1-diphosphate: step 7/9. The protein is Histidinol-phosphate aminotransferase of Aromatoleum aromaticum (strain DSM 19018 / LMG 30748 / EbN1) (Azoarcus sp. (strain EbN1)).